The sequence spans 1453 residues: NRPS-like tryptophan epimerase fscC (1453 aa).

Residues 37–433 are adenylation; it reads SYGELSAMSS…ATHLIRNCVV (397 aa). Residues 544–626 enclose the Carrier domain; sequence TGSRQSTRHK…LFHTSKSRFT (83 aa). S586 carries the O-(pantetheine 4'-phosphoryl)serine modification. The tract at residues 639–1053 is epimerization (E) domain; the sequence is FPLSPVQRFF…KDVLESAGVF (415 aa). Residues 1181–1391 are condensation; the sequence is FFGLQSNERA…AGSSLHQHNQ (211 aa).

This sequence belongs to the NRP synthetase family. Requires pantetheine 4'-phosphate as cofactor.

It functions in the pathway secondary metabolite biosynthesis. In terms of biological role, NRPS-like tryptophan epimerase; part of the fragmented gene cluster that mediates the biosynthesis of fusarochromene, a tryptophan-derived metabolite closely related to a group of mycotoxins including fusarochromanone. Within the pathway, fscC catalyzes the first step via epimerization of L-tryptophan to provide the intermediate D-tryptophan. D-tryptophan is subsequently hydroxylated by the tryptophan 6-hydroxylase fscE to yield 6-hydroxytryptophan. The pyrrole ring undergoes cleavaged by the tryptophan 2,3-dioxygenase fscD and is finally converted to 4-hydroxykyrunenine by the hydrolase fscH. The NRPS-like oxidoreductase fscA reduces the carboxyl group to primary alcohol and the DMATS-type prenyltransferase fscG performs prenylation, followed by the formation of a chromene ring catalyzed by the oxidoreductase fscI, which leads to desacetylfusarochromene. Epoxidation by fscF and rearrangement reactions of chromene double bonds convert compound desacetylfusarochromene to fusarochromanones. Although specific acetyltransferases were not found near the fsc gene cluster, several predicted enzymes containing the N-acetyltransferase superfamily domain are present in the genome of F.equiseti. These predicted enzymes may have the potential to convert desacetylfusarochromene to fusarochromene. In Fusarium equiseti (Fusarium scirpi), this protein is NRPS-like tryptophan epimerase fscC.